A 314-amino-acid polypeptide reads, in one-letter code: Homoserine kinase (314 aa).

96–106 (PIGSGLGSSAC) lines the ATP pocket.

Belongs to the GHMP kinase family. Homoserine kinase subfamily.

The protein localises to the cytoplasm. It catalyses the reaction L-homoserine + ATP = O-phospho-L-homoserine + ADP + H(+). It participates in amino-acid biosynthesis; L-threonine biosynthesis; L-threonine from L-aspartate: step 4/5. Functionally, catalyzes the ATP-dependent phosphorylation of L-homoserine to L-homoserine phosphate. This is Homoserine kinase from Haemophilus influenzae (strain 86-028NP).